A 383-amino-acid chain; its full sequence is Chorismate synthase (383 aa).

The NADP(+) site is built by R39 and R45. Residues 128–130 (RAS), G291, 306–310 (KPIAT), and R332 each bind FMN.

Belongs to the chorismate synthase family. In terms of assembly, homotetramer. The cofactor is FMNH2.

It catalyses the reaction 5-O-(1-carboxyvinyl)-3-phosphoshikimate = chorismate + phosphate. It functions in the pathway metabolic intermediate biosynthesis; chorismate biosynthesis; chorismate from D-erythrose 4-phosphate and phosphoenolpyruvate: step 7/7. In terms of biological role, catalyzes the anti-1,4-elimination of the C-3 phosphate and the C-6 proR hydrogen from 5-enolpyruvylshikimate-3-phosphate (EPSP) to yield chorismate, which is the branch point compound that serves as the starting substrate for the three terminal pathways of aromatic amino acid biosynthesis. This reaction introduces a second double bond into the aromatic ring system. The sequence is that of Chorismate synthase from Thermus thermophilus (strain ATCC BAA-163 / DSM 7039 / HB27).